A 217-amino-acid chain; its full sequence is Uracil-DNA glycosylase (217 aa).

D62 functions as the Proton acceptor in the catalytic mechanism.

The protein belongs to the uracil-DNA glycosylase (UDG) superfamily. UNG family.

The protein localises to the cytoplasm. The catalysed reaction is Hydrolyzes single-stranded DNA or mismatched double-stranded DNA and polynucleotides, releasing free uracil.. In terms of biological role, excises uracil residues from the DNA which can arise as a result of misincorporation of dUMP residues by DNA polymerase or due to deamination of cytosine. The chain is Uracil-DNA glycosylase from Streptococcus gordonii (strain Challis / ATCC 35105 / BCRC 15272 / CH1 / DL1 / V288).